The primary structure comprises 259 residues: Phosphoribosylaminoimidazole-succinocarboxamide synthase (259 aa).

Belongs to the SAICAR synthetase family.

The catalysed reaction is 5-amino-1-(5-phospho-D-ribosyl)imidazole-4-carboxylate + L-aspartate + ATP = (2S)-2-[5-amino-1-(5-phospho-beta-D-ribosyl)imidazole-4-carboxamido]succinate + ADP + phosphate + 2 H(+). The protein operates within purine metabolism; IMP biosynthesis via de novo pathway; 5-amino-1-(5-phospho-D-ribosyl)imidazole-4-carboxamide from 5-amino-1-(5-phospho-D-ribosyl)imidazole-4-carboxylate: step 1/2. This chain is Phosphoribosylaminoimidazole-succinocarboxamide synthase, found in Zymomonas mobilis subsp. mobilis (strain ATCC 31821 / ZM4 / CP4).